Here is a 137-residue protein sequence, read N- to C-terminus: Large ribosomal subunit protein uL16 (137 aa).

The span at 1–17 (MLSPKRVKFRKRQRGRL) shows a compositional bias: basic residues. Residues 1–24 (MLSPKRVKFRKRQRGRLKGTDERG) form a disordered region.

This sequence belongs to the universal ribosomal protein uL16 family. As to quaternary structure, part of the 50S ribosomal subunit.

In terms of biological role, binds 23S rRNA and is also seen to make contacts with the A and possibly P site tRNAs. The protein is Large ribosomal subunit protein uL16 of Leptospira borgpetersenii serovar Hardjo-bovis (strain JB197).